An 872-amino-acid chain; its full sequence is DNA mismatch repair protein MutS (872 aa).

Position 632–639 (632–639 (GPNMGGKS)) interacts with ATP.

This sequence belongs to the DNA mismatch repair MutS family.

This protein is involved in the repair of mismatches in DNA. It is possible that it carries out the mismatch recognition step. This protein has a weak ATPase activity. The polypeptide is DNA mismatch repair protein MutS (Colwellia psychrerythraea (strain 34H / ATCC BAA-681) (Vibrio psychroerythus)).